We begin with the raw amino-acid sequence, 147 residues long: D-aminoacyl-tRNA deacylase (147 aa).

The Gly-cisPro motif, important for rejection of L-amino acids signature appears at 137-138; it reads GP.

The protein belongs to the DTD family. In terms of assembly, homodimer.

Its subcellular location is the cytoplasm. The catalysed reaction is glycyl-tRNA(Ala) + H2O = tRNA(Ala) + glycine + H(+). It catalyses the reaction a D-aminoacyl-tRNA + H2O = a tRNA + a D-alpha-amino acid + H(+). Functionally, an aminoacyl-tRNA editing enzyme that deacylates mischarged D-aminoacyl-tRNAs. Also deacylates mischarged glycyl-tRNA(Ala), protecting cells against glycine mischarging by AlaRS. Acts via tRNA-based rather than protein-based catalysis; rejects L-amino acids rather than detecting D-amino acids in the active site. By recycling D-aminoacyl-tRNA to D-amino acids and free tRNA molecules, this enzyme counteracts the toxicity associated with the formation of D-aminoacyl-tRNA entities in vivo and helps enforce protein L-homochirality. The protein is D-aminoacyl-tRNA deacylase of Acinetobacter baumannii (strain ATCC 17978 / DSM 105126 / CIP 53.77 / LMG 1025 / NCDC KC755 / 5377).